Here is a 91-residue protein sequence, read N- to C-terminus: Cell division protein FtsB (91 aa).

Residues 1–3 (MKF) lie on the Cytoplasmic side of the membrane. Residues 4–21 (IVGLLLVLLLALQYQLWI) form a helical membrane-spanning segment. Over 22-91 (SKDGLGELRQ…ETFFQVVEEP (70 aa)) the chain is Periplasmic. The stretch at 26-74 (LGELRQLSRSIKQQRHENATLIERNQVLKAEVQDLKSGLDALEERARSG) forms a coiled coil.

This sequence belongs to the FtsB family. In terms of assembly, part of a complex composed of FtsB, FtsL and FtsQ.

The protein resides in the cell inner membrane. Its function is as follows. Essential cell division protein. May link together the upstream cell division proteins, which are predominantly cytoplasmic, with the downstream cell division proteins, which are predominantly periplasmic. This chain is Cell division protein FtsB, found in Nitrosococcus oceani (strain ATCC 19707 / BCRC 17464 / JCM 30415 / NCIMB 11848 / C-107).